We begin with the raw amino-acid sequence, 96 residues long: Putative membrane protein insertion efficiency factor (96 aa).

Over residues 71-84 (THGTAAAPPASAAP) the composition is skewed to low complexity. Residues 71–96 (THGTAAAPPASAAPGRPPVTVRLPRP) form a disordered region.

It belongs to the UPF0161 family.

It is found in the cell inner membrane. Could be involved in insertion of integral membrane proteins into the membrane. The sequence is that of Putative membrane protein insertion efficiency factor from Cupriavidus metallidurans (strain ATCC 43123 / DSM 2839 / NBRC 102507 / CH34) (Ralstonia metallidurans).